Consider the following 850-residue polypeptide: Pentatricopeptide repeat-containing protein At3g49170, chloroplastic (850 aa).

The transit peptide at 1-50 (MAMISFSFPSPAKLPIKSQPSVSNRINVADRLILRHLNAGDLRGAVSALD) directs the protein to the chloroplast. PPR repeat units lie at residues 61–95 (DSVT…DIEP), 96–130 (DSVL…GKRD), 131–164 (VVSW…GLVP), 165–199 (NDYC…GHFE), 201–232 (DVCV…MSEL), 233–267 (NVVT…GFES), 268–302 (DKFT…GLVD), 303–334 (DVEC…MEDH), 335–370 (SVMS…GHVE), 372–406 (NHFT…GLAS), 407–437 (NSSV…LSEK), 438–472 (NLVS…ELGV), 473–507 (SAFT…GLSC), 508–538 (NQPV…MENR), 539–573 (NVIS…GVKP), 574–609 (NEVT…KIKP), and 610–640 (KMEH…MPFQ). A type E motif region spans residues 645–720 (VWRTFLGACR…EGGCSWIEVG (76 aa)). The tract at residues 721–751 (DKIHKFYVGDTAHPNAHQIYDELDRLITEIK) is type E(+) motif. The type DYW motif stretch occupies residues 752–850 (RCGYVPDTDL…DGKCSCNDYW (99 aa)).

It belongs to the PPR family. PCMP-H subfamily.

It localises to the plastid. The protein localises to the chloroplast. Functionally, may play a role in embryogenesis. This Arabidopsis thaliana (Mouse-ear cress) protein is Pentatricopeptide repeat-containing protein At3g49170, chloroplastic (EMB2261).